Consider the following 427-residue polypeptide: MKTTKSKKLYKQALKLMPGGVNSPVRAFKAVGGNPLFIAKAKGSKIYDVDGNEYIDYVLSWGPLILGHAYPSVVKALKKAIEKGTSYGAPTELEIKLATLVKKAFPSIEKLRFVNSGTEATMSAIRVARGFTKRNKVIKFEGCYHGHVDGLLVSAGSGGATFSIPDSLGVPQSYTSETIVLPFNDINTFKNTLKEHWKDIACVIVEPVVGNMGCILPKDEFLKVLRNETQKYGIVLIFDEVMTGFRVSFGGAQQYYGVKPDLTCLGKVIGGGLPVGAYGGKKEIMALVAPDGGVYQAGTLSGNPIAMTAGIETLKVLSKASVYKRLEKTMQYLEEGLKDSAKQAGINVKFYRAGTMFCTYFTENEVIDAKTAKTSDTEKFKQFFLGMLQKGVYIAPSQFEAGFISLAHSEKDIEKTVQAAYKIFKKL.

K267 bears the N6-(pyridoxal phosphate)lysine mark.

It belongs to the class-III pyridoxal-phosphate-dependent aminotransferase family. HemL subfamily. In terms of assembly, homodimer. The cofactor is pyridoxal 5'-phosphate.

The protein resides in the cytoplasm. The catalysed reaction is (S)-4-amino-5-oxopentanoate = 5-aminolevulinate. It functions in the pathway porphyrin-containing compound metabolism; protoporphyrin-IX biosynthesis; 5-aminolevulinate from L-glutamyl-tRNA(Glu): step 2/2. In Thermodesulfovibrio yellowstonii (strain ATCC 51303 / DSM 11347 / YP87), this protein is Glutamate-1-semialdehyde 2,1-aminomutase.